The sequence spans 639 residues: Threonine--tRNA ligase (639 aa).

In terms of domain architecture, TGS spans Met-1–Thr-62. Positions Asp-246–Pro-537 are catalytic. The Zn(2+) site is built by Cys-337, His-388, and His-514.

This sequence belongs to the class-II aminoacyl-tRNA synthetase family. Homodimer. Requires Zn(2+) as cofactor.

The protein localises to the cytoplasm. It catalyses the reaction tRNA(Thr) + L-threonine + ATP = L-threonyl-tRNA(Thr) + AMP + diphosphate + H(+). Its function is as follows. Catalyzes the attachment of threonine to tRNA(Thr) in a two-step reaction: L-threonine is first activated by ATP to form Thr-AMP and then transferred to the acceptor end of tRNA(Thr). Also edits incorrectly charged L-seryl-tRNA(Thr). This chain is Threonine--tRNA ligase, found in Leptospira borgpetersenii serovar Hardjo-bovis (strain JB197).